The chain runs to 837 residues: Anaphase-promoting complex subunit 2 (837 aa).

5 positions are modified to phosphoserine: S233, S329, S485, S549, and S712. The segment at 478–508 (CLETGQDSEDDSGEPEDWVPDPVDADPVKSS) is disordered. A compositionally biased stretch (acidic residues) spans 483–496 (QDSEDDSGEPEDWV). Residue Y825 is modified to Phosphotyrosine.

It belongs to the cullin family. In terms of assembly, the mammalian APC/C is composed at least of 14 distinct subunits ANAPC1, ANAPC2, CDC27/APC3, ANAPC4, ANAPC5, CDC16/APC6, ANAPC7, CDC23/APC8, ANAPC10, ANAPC11, CDC26/APC12, ANAPC13, ANAPC15 and ANAPC16 that assemble into a complex of at least 19 chains with a combined molecular mass of around 1.2 MDa; APC/C interacts with FZR1 and FBXO5. In the context of the APC/C complex, directly interacts with UBE2C and UBE2S. Interacts (via cullin domain) with ANAPC11 and with UBCH10. Interacts with NEUROD2. Interacts with FBXO43; the interaction is direct.

It functions in the pathway protein modification; protein ubiquitination. Its function is as follows. Together with the RING-H2 protein ANAPC11, constitutes the catalytic component of the anaphase promoting complex/cyclosome (APC/C), a cell cycle-regulated E3 ubiquitin ligase that controls progression through mitosis and the G1 phase of the cell cycle. The APC/C complex acts by mediating ubiquitination and subsequent degradation of target proteins: it mainly mediates the formation of 'Lys-11'-linked polyubiquitin chains and, to a lower extent, the formation of 'Lys-48'- and 'Lys-63'-linked polyubiquitin chains. The APC/C complex catalyzes assembly of branched 'Lys-11'-/'Lys-48'-linked branched ubiquitin chains on target proteins. The CDC20-APC/C complex positively regulates the formation of synaptic vesicle clustering at active zone to the presynaptic membrane in postmitotic neurons. CDC20-APC/C-induced degradation of NEUROD2 drives presynaptic differentiation. The chain is Anaphase-promoting complex subunit 2 (Anapc2) from Mus musculus (Mouse).